Here is a 120-residue protein sequence, read N- to C-terminus: uncharacterized protein (120 aa).

The N-terminal stretch at 1–18 (MRSWIPLLVLFAVLAVFA) is a signal peptide. The interval 20 to 99 (AGKSSESDES…GDNRVKRDGL (80 aa)) is disordered.

This is an uncharacterized protein from Caenorhabditis elegans.